The following is a 229-amino-acid chain: MANELTWHDVLAEEKQQPYFLNTLQTVASERQSGVTIYPPQKDVFNAFRFTELGDVKVVILGQDPYHGPGQAHGLAFSVRPGIATPPSLLNMYKELENTIPGFTRPNHGYLESWARQGVLLLNTVLTVRAGQAHSHASLGWETFTDKVISLINQHRKGVVFLLWGSHAQKKGAIIDKQRHHVLKAPHPSPLSAHRGFFGCNHFVLANQWLEQRGETPIDWMPVLPAESE.

The active-site Proton acceptor is the D64.

Belongs to the uracil-DNA glycosylase (UDG) superfamily. UNG family.

It is found in the cytoplasm. It catalyses the reaction Hydrolyzes single-stranded DNA or mismatched double-stranded DNA and polynucleotides, releasing free uracil.. Excises uracil residues from the DNA which can arise as a result of misincorporation of dUMP residues by DNA polymerase or due to deamination of cytosine. The protein is Uracil-DNA glycosylase of Escherichia coli O7:K1 (strain IAI39 / ExPEC).